Reading from the N-terminus, the 495-residue chain is Transcription termination/antitermination protein NusA (495 aa).

Residues 135 to 200 form the S1 motif domain; it reads GEIITGVVKK…RGAQLFVTRS (66 aa). Positions 302-368 constitute a KH domain; the sequence is KHTMDIAVEA…FTKYLDIDED (67 aa). A run of 2 repeats spans residues 364 to 414 and 439 to 489. The segment at 364 to 489 is 2 X 51 AA approximate repeats; sequence DIDEDFATVL…ALIMAARNIC (126 aa).

This sequence belongs to the NusA family. As to quaternary structure, monomer. Binds directly to the core enzyme of the DNA-dependent RNA polymerase and to nascent RNA.

Its subcellular location is the cytoplasm. In terms of biological role, participates in both transcription termination and antitermination. The sequence is that of Transcription termination/antitermination protein NusA from Shigella flexneri.